Reading from the N-terminus, the 219-residue chain is Thiamine-phosphate synthase (219 aa).

4-amino-2-methyl-5-(diphosphooxymethyl)pyrimidine-binding positions include 44–48 and Asn79; that span reads QFREK. The Mg(2+) site is built by Asp80 and Asp99. Ser117 contributes to the 4-amino-2-methyl-5-(diphosphooxymethyl)pyrimidine binding site. Residue 143 to 145 participates in 2-[(2R,5Z)-2-carboxy-4-methylthiazol-5(2H)-ylidene]ethyl phosphate binding; it reads TST. Lys146 is a 4-amino-2-methyl-5-(diphosphooxymethyl)pyrimidine binding site. 2-[(2R,5Z)-2-carboxy-4-methylthiazol-5(2H)-ylidene]ethyl phosphate is bound by residues Gly175 and 195–196; that span reads IS.

This sequence belongs to the thiamine-phosphate synthase family. Mg(2+) serves as cofactor.

It carries out the reaction 2-[(2R,5Z)-2-carboxy-4-methylthiazol-5(2H)-ylidene]ethyl phosphate + 4-amino-2-methyl-5-(diphosphooxymethyl)pyrimidine + 2 H(+) = thiamine phosphate + CO2 + diphosphate. The enzyme catalyses 2-(2-carboxy-4-methylthiazol-5-yl)ethyl phosphate + 4-amino-2-methyl-5-(diphosphooxymethyl)pyrimidine + 2 H(+) = thiamine phosphate + CO2 + diphosphate. The catalysed reaction is 4-methyl-5-(2-phosphooxyethyl)-thiazole + 4-amino-2-methyl-5-(diphosphooxymethyl)pyrimidine + H(+) = thiamine phosphate + diphosphate. The protein operates within cofactor biosynthesis; thiamine diphosphate biosynthesis; thiamine phosphate from 4-amino-2-methyl-5-diphosphomethylpyrimidine and 4-methyl-5-(2-phosphoethyl)-thiazole: step 1/1. Functionally, condenses 4-methyl-5-(beta-hydroxyethyl)thiazole monophosphate (THZ-P) and 2-methyl-4-amino-5-hydroxymethyl pyrimidine pyrophosphate (HMP-PP) to form thiamine monophosphate (TMP). The polypeptide is Thiamine-phosphate synthase (Bacillus cereus (strain ATCC 14579 / DSM 31 / CCUG 7414 / JCM 2152 / NBRC 15305 / NCIMB 9373 / NCTC 2599 / NRRL B-3711)).